Here is a 32-residue protein sequence, read N- to C-terminus: SNKRKNAAMLDMIAQHAIRGCCSDPRCRYRCR.

Positions 1 to 19 (SNKRKNAAMLDMIAQHAIR) are excised as a propeptide. Cystine bridges form between cysteine 21/cysteine 27 and cysteine 22/cysteine 31.

Belongs to the conotoxin A superfamily. The disulfide bond CysI-CysIII is important for alpha-9-alpha-10 subtype inhibition, whereas the bond CysII-CysIV contributes to GABA(B) modulation. Expressed by the venom duct.

It is found in the secreted. Its function is as follows. This toxin target two types of receptors, the nicotinic acetylcholine receptor (nAChR) and the G-protein-coupled receptor GABA(B). It specifically inhibits the alpha-9-alpha-10/CHRNA9-CHRNA10 nAChR, with preference for rat receptors. It interacts with the alpha-10(+)/alpha-9(-)interface of the receptor. It shows a two order of magnitude species difference potency for the rat versus human alpha-9-alpha-10 nAChR, due to the Thr-86 located in the alpha-9 nAChR subunit. This toxin also shows inhibition of high voltage-activated (HVA) calcium channels (Cav2.2) by acting on GABA(B) receptors (GABBR1 and GABBR2). In vivo, this toxin produces an acute antinociceptive effect in peripheral nerve-injured rats, which may be related to the inhibition of immune cell buildup at the site of nerve injury. In addition, when intramuscularly injected into rats following chronic constriction injury of the sciatic nerve, this toxin protects peripheral nervous tissues as well as prevents central maladaptive plasticity by inhibiting glial cell activation. This chain is Alpha-conotoxin RgIA, found in Conus regius (Crown cone).